Reading from the N-terminus, the 141-residue chain is Large ribosomal subunit protein uL16 (141 aa).

Belongs to the universal ribosomal protein uL16 family. As to quaternary structure, part of the 50S ribosomal subunit.

Its function is as follows. Binds 23S rRNA and is also seen to make contacts with the A and possibly P site tRNAs. The chain is Large ribosomal subunit protein uL16 from Petrotoga mobilis (strain DSM 10674 / SJ95).